The following is a 558-amino-acid chain: Small ribosomal subunit protein bS1 (558 aa).

S1 motif domains lie at 21–87, 105–171, 192–260, 277–347, 364–434, and 451–520; these read GSII…LSRE, SETV…VSRR, GMHV…LGLK, ETKL…LGLK, GVHV…LGIK, and GAII…LTIH.

Belongs to the bacterial ribosomal protein bS1 family.

Its function is as follows. Binds mRNA; thus facilitating recognition of the initiation point. It is needed to translate mRNA with a short Shine-Dalgarno (SD) purine-rich sequence. The polypeptide is Small ribosomal subunit protein bS1 (rpsA) (Buchnera aphidicola subsp. Acyrthosiphon pisum (strain APS) (Acyrthosiphon pisum symbiotic bacterium)).